The following is a 931-amino-acid chain: MSPCGYYSKWRNRDRPEYRRNLRFRRFFSSIHPNAAAGSGFNGPGVFITSVTGVWLCFLCIFSMFVTAVVSVSPSSFYESLQVEPTQSEDITRSAHLGDGDEIREAIHKSQDAETKPTFYVCPPPTGSTIVRLEPTRTCPDYHLGKNFTEGIAVVYKENIAAYKFKATVYYKDVIVSTAWAGSSYTQITNRYADRVPIPVSEITDTIDKFGKCSSKATYVRNNHKVEAFNEDKNPQDMPLIASKYNSVGSKAWHTTNDTYMVAGTPGTYRTGTSVNCIIEEVEARSIFPYDSFGLSTGDIIYMSPFFGLRDGAYREHSNYAMDRFHQFEGYRQRDLDTRALLEPAARNFLVTPHLTVGWNWKPKRTEVCSLVKWREVEDVVRDEYAHNFRFTMKTLSTTFISETNEFNLNQIHLSQCVKEEARAIINRIYTTRYNSSHVRTGDIQTYLARGGFVVVFQPLLSNSLARLYLQELVRENTNHSPQKHPTRNTRSRRSVPVELRANRTITTTSSVEFAMLQFTYDHIQEHVNEMLARISSSWCQLQNRERALWSGLFPINPSALASTILDQRVKARILGDVISVSNCPELGSDTRIILQNSMRVSGSTTRCYSRPLISIVSLNGSGTVEGQLGTDNELIMSRDLLEPCVANHKRYFLFGHHYVYYEDYRYVREIAVHDVGMISTYVDLNLTLLKDREFMPLQVYTRDELRDTGLLDYSEIQRRNQMHSLRFYDIDKVVQYDSGTAIMQGMAQFFQGLGTAGQAVGHVVLGATGALLSTVHGFTTFLSNPFGALAVGLLVLAGLVAAFFAYRYVLKLKTSPMKALYPLTTKGLKQLPEGMDPFAEKPNATDTPIEEIGDSQNTEPSVNSGFDPDKFREAQEMIKYMTLVSAAERQESKARKKNKTSALLTSRLTGLALRNRRGYSRVRTENVTGV.

A signal peptide spans 1–71 (MSPCGYYSKW…FSMFVTAVVS (71 aa)). Residues 72–786 (VSPSSFYESL…HGFTTFLSNP (715 aa)) lie on the Virion surface side of the membrane. Intrachain disulfides connect C122/C584, C139/C540, C213/C277, C369/C417, and C608/C645. Residue N147 is glycosylated (N-linked (GlcNAc...) asparagine; by host). Residues 179-185 (AWAGSSY) form an involved in fusion and/or binding to host membrane region. N-linked (GlcNAc...) asparagine; by host glycosylation occurs at N257. An involved in fusion and/or binding to host membrane region spans residues 264 to 271 (GTPGTYRT). N435, N503, N620, and N686 each carry an N-linked (GlcNAc...) asparagine; by host glycan. Hydrophobic membrane proximal region stretches follow at residues 731–784 (IDKV…TFLS) and 764–784 (VVLG…TFLS). A helical transmembrane segment spans residues 787-807 (FGALAVGLLVLAGLVAAFFAY). The Intravirion portion of the chain corresponds to 808–931 (RYVLKLKTSP…RVRTENVTGV (124 aa)). A Golgi targeting motif is present at residues 881 to 884 (YMTL). The short motif at 904–906 (LLT) is the Di-leucine internalization motif element. An Internalization motif motif is present at residues 920-923 (YSRV).

Belongs to the herpesviridae glycoprotein B family. As to quaternary structure, homotrimer; disulfide-linked. Binds to heparan sulfate proteoglycans. Interacts with gH/gL heterodimer. Interacts with gE. Post-translationally, a proteolytic cleavage by host furin generates two subunits that remain linked by disulfide bonds.

The protein resides in the virion membrane. It is found in the host cell membrane. It localises to the host endosome membrane. The protein localises to the host Golgi apparatus membrane. Its function is as follows. Envelope glycoprotein that forms spikes at the surface of virion envelope. Essential for the initial attachment to heparan sulfate moieties of the host cell surface proteoglycans. Involved in fusion of viral and cellular membranes leading to virus entry into the host cell. Following initial binding to its host receptors, membrane fusion is mediated by the fusion machinery composed at least of gB and the heterodimer gH/gL. May be involved in the fusion between the virion envelope and the outer nuclear membrane during virion egress. This is Envelope glycoprotein B from Varicella-zoster virus (strain Dumas) (HHV-3).